Consider the following 120-residue polypeptide: Flagellar protein FliT (120 aa).

The required for homodimerization stretch occupies residues 1 to 50 (MENLSPLLIEYQGLLKLIRNIKAMALNGLWDDVVEQEIVYIQSIERISQI). Residues 60–98 (VQLQFRQLLQDILDTESQVKELLQNRMQELAVLIQQSQN) form a fliD binding region.

The protein belongs to the FliT family. Homodimer. Interacts with FliD and FlhC.

The protein localises to the cytoplasm. Its subcellular location is the cytosol. In terms of biological role, dual-function protein that regulates the transcription of class 2 flagellar operons and that also acts as an export chaperone for the filament-capping protein FliD. As a transcriptional regulator, acts as an anti-FlhDC factor; it directly binds FlhC, thus inhibiting the binding of the FlhC/FlhD complex to class 2 promoters, resulting in decreased expression of class 2 flagellar operons. As a chaperone, effects FliD transition to the membrane by preventing its premature polymerization, and by directing it to the export apparatus. The sequence is that of Flagellar protein FliT from Dickeya chrysanthemi (Pectobacterium chrysanthemi).